The sequence spans 306 residues: Ribonuclease Z (306 aa).

Residues histidine 63, histidine 65, aspartate 67, histidine 68, histidine 140, aspartate 211, and histidine 269 each contribute to the Zn(2+) site. The active-site Proton acceptor is aspartate 67.

This sequence belongs to the RNase Z family. As to quaternary structure, homodimer. Requires Zn(2+) as cofactor.

It carries out the reaction Endonucleolytic cleavage of RNA, removing extra 3' nucleotides from tRNA precursor, generating 3' termini of tRNAs. A 3'-hydroxy group is left at the tRNA terminus and a 5'-phosphoryl group is left at the trailer molecule.. In terms of biological role, zinc phosphodiesterase, which displays some tRNA 3'-processing endonuclease activity. Probably involved in tRNA maturation, by removing a 3'-trailer from precursor tRNA. The sequence is that of Ribonuclease Z from Listeria innocua serovar 6a (strain ATCC BAA-680 / CLIP 11262).